The chain runs to 138 residues: Fusaristatin A biosynthesis cluster protein FGSG_08206 (138 aa).

Positions 33-130 (VHRVTMFKMP…TIDGMMTVFF (98 aa)) constitute a Stress-response A/B barrel domain.

It functions in the pathway secondary metabolite biosynthesis. Its function is as follows. Part of the gene cluster that mediates the biosynthesis of the lipopeptide fusaristatin A. Fusaristatin A consists of a polyketide chain linked to three amino acid residues glutamine (Gln), dehydroalanine (dehydro-Ala), and beta-aminoisobutyric acid. The biosynthesis starts with formation of a linear polyketide chain by the highly reducing polyketide synthase PKS6. The gene cluster does not contain an acyl-CoA ligase or an acyl-transferase, and it is therefore predicted that the polyketide is transferred directly to the nonribosomal peptide synthetase NRPS7. Modules 1-3 from NRPS7 incorporate dehydro-Ala, Gln, and beta-aminoisobutyric acid in the compound, which is released by cyclization. The beta-aminoisobutyric acid units are most likely not freely available to the NRPS, but can be synthesized from thymine, which requires a dehydrogenase, a monooxygenase, and an aminotransferase. The fusaristatin A cluster contains a cytochrome P450 monooxygenase (FGSG_08207) and an aminotransferase (FGSG_17085), which theoretically can perform two of the enzymatic steps. The enzymes may however also be involved in biosynthesis of dehydroalanine or modification of the polyketide. The dehydro-Ala residue can be a result of cyclization, where serine is dehydrated. The last gene of the cluster encodes a protein with an A/B barrel domain found in variable enzymes, which hampers functional prediction. The protein is Fusaristatin A biosynthesis cluster protein FGSG_08206 of Gibberella zeae (strain ATCC MYA-4620 / CBS 123657 / FGSC 9075 / NRRL 31084 / PH-1) (Wheat head blight fungus).